A 234-amino-acid chain; its full sequence is Sugar fermentation stimulation protein homolog (234 aa).

It belongs to the SfsA family.

The sequence is that of Sugar fermentation stimulation protein homolog from Shewanella baltica (strain OS155 / ATCC BAA-1091).